Reading from the N-terminus, the 162-residue chain is Shikimate kinase (162 aa).

An ATP-binding site is contributed by 10–15 (GAGKST). Ser14 contacts Mg(2+). Substrate contacts are provided by Asp28, Arg52, and Gly73. Position 113 (Arg113) interacts with ATP. Arg129 is a substrate binding site.

Belongs to the shikimate kinase family. As to quaternary structure, monomer. It depends on Mg(2+) as a cofactor.

Its subcellular location is the cytoplasm. It carries out the reaction shikimate + ATP = 3-phosphoshikimate + ADP + H(+). The protein operates within metabolic intermediate biosynthesis; chorismate biosynthesis; chorismate from D-erythrose 4-phosphate and phosphoenolpyruvate: step 5/7. Its function is as follows. Catalyzes the specific phosphorylation of the 3-hydroxyl group of shikimic acid using ATP as a cosubstrate. This is Shikimate kinase from Lactococcus lactis subsp. lactis (strain IL1403) (Streptococcus lactis).